A 412-amino-acid polypeptide reads, in one-letter code: Allantoate amidohydrolase (412 aa).

Zn(2+)-binding residues include H84, D95, E130, and H193. Residues R218, N278, and R291 each contribute to the allantoate site. H385 lines the Zn(2+) pocket.

This sequence belongs to the peptidase M20 family. Homodimer. Zn(2+) is required as a cofactor.

Its subcellular location is the cytoplasm. The enzyme catalyses allantoate + H2O + 2 H(+) = (S)-2-ureidoglycine + NH4(+) + CO2. Its pathway is nitrogen metabolism; (S)-allantoin degradation. Its function is as follows. Involved in the anaerobic nitrogen utilization via the assimilation of allantoin. Catalyzes specifically the hydrolysis of allantoate to yield CO2, NH3 and S-ureidoglycine, which is unstable and readily undergoes a second deamination by S-ureidoglycine aminohydrolase AllE to yield S-ureidoglycolate and NH3. This Bacillus subtilis (strain 168) protein is Allantoate amidohydrolase.